Reading from the N-terminus, the 80-residue chain is Exodeoxyribonuclease 7 small subunit (80 aa).

Belongs to the XseB family. As to quaternary structure, heterooligomer composed of large and small subunits.

Its subcellular location is the cytoplasm. It catalyses the reaction Exonucleolytic cleavage in either 5'- to 3'- or 3'- to 5'-direction to yield nucleoside 5'-phosphates.. Its function is as follows. Bidirectionally degrades single-stranded DNA into large acid-insoluble oligonucleotides, which are then degraded further into small acid-soluble oligonucleotides. The protein is Exodeoxyribonuclease 7 small subunit of Pseudomonas putida (strain ATCC 700007 / DSM 6899 / JCM 31910 / BCRC 17059 / LMG 24140 / F1).